Here is a 77-residue protein sequence, read N- to C-terminus: Putative defensin-like protein 162 (77 aa).

Residues 1 to 27 form the signal peptide; the sequence is MAKQLCSYMFISMFILSAFLALPSAEG. 4 disulfides stabilise this stretch: C34/C77, C44/C63, C49/C71, and C53/C73.

Belongs to the DEFL family.

Its subcellular location is the secreted. This chain is Putative defensin-like protein 162 (LCR37), found in Arabidopsis thaliana (Mouse-ear cress).